The chain runs to 145 residues: ATP synthase epsilon chain (145 aa).

A compositionally biased stretch (basic and acidic residues) spans 93-104; it reads AEAEKARARAQE. Residues 93-113 form a disordered region; the sequence is AEAEKARARAQEALKNPDASK.

The protein belongs to the ATPase epsilon chain family. As to quaternary structure, F-type ATPases have 2 components, CF(1) - the catalytic core - and CF(0) - the membrane proton channel. CF(1) has five subunits: alpha(3), beta(3), gamma(1), delta(1), epsilon(1). CF(0) has three main subunits: a, b and c.

The protein resides in the cell inner membrane. Functionally, produces ATP from ADP in the presence of a proton gradient across the membrane. The sequence is that of ATP synthase epsilon chain from Francisella philomiragia subsp. philomiragia (strain ATCC 25017 / CCUG 19701 / FSC 153 / O#319-036).